The following is a 728-amino-acid chain: Procollagen-lysine,2-oxoglutarate 5-dioxygenase 1 (728 aa).

The signal sequence occupies residues 1–18 (MRSLLLLASLAWLLLAQA). Residues Asn177, Asn198, and Asn539 are each glycosylated (N-linked (GlcNAc...) asparagine). In terms of domain architecture, Fe2OG dioxygenase spans 637–728 (QFDLAFVVRY…RYIAVSFVDP (92 aa)). Positions 657 and 659 each coordinate Fe cation. N-linked (GlcNAc...) asparagine glycosylation occurs at Asn687. His709 provides a ligand contact to Fe cation. Residue Arg719 is part of the active site.

In terms of assembly, homodimer. Identified in a complex with P3H3 and P3H4. Fe(2+) serves as cofactor. L-ascorbate is required as a cofactor.

The protein localises to the rough endoplasmic reticulum membrane. It carries out the reaction L-lysyl-[collagen] + 2-oxoglutarate + O2 = (5R)-5-hydroxy-L-lysyl-[collagen] + succinate + CO2. Part of a complex composed of PLOD1, P3H3 and P3H4 that catalyzes hydroxylation of lysine residues in collagen alpha chains and is required for normal assembly and cross-linkling of collagen fibrils. Forms hydroxylysine residues in -Xaa-Lys-Gly- sequences in collagens. These hydroxylysines serve as sites of attachment for carbohydrate units and are essential for the stability of the intermolecular collagen cross-links. The chain is Procollagen-lysine,2-oxoglutarate 5-dioxygenase 1 (Plod1) from Rattus norvegicus (Rat).